The chain runs to 58 residues: Light-harvesting protein B-870 alpha chain (58 aa).

The Cytoplasmic segment spans residues 1–15 (MSKFYKIWLVFDPRR). A helical membrane pass occupies residues 16 to 36 (VFVAQGVFLFLLAVLIHLILL). His32 contributes to the a bacteriochlorophyll binding site. At 37–58 (STPAFNWLTVATAKHGYVAAAQ) the chain is on the periplasmic side.

This sequence belongs to the antenna complex alpha subunit family. The core complex is formed by different alpha and beta chains, binding bacteriochlorophyll molecules, and arranged most probably in tetrameric structures disposed around the reaction center. The non-pigmented gamma chains may constitute additional components.

It is found in the cell inner membrane. In terms of biological role, antenna complexes are light-harvesting systems, which transfer the excitation energy to the reaction centers. In Rhodobacter capsulatus (Rhodopseudomonas capsulata), this protein is Light-harvesting protein B-870 alpha chain (pufA).